Consider the following 514-residue polypeptide: 1-pyrroline-5-carboxylate dehydrogenase (514 aa).

Catalysis depends on residues E286 and C320.

It belongs to the aldehyde dehydrogenase family. RocA subfamily.

It carries out the reaction L-glutamate 5-semialdehyde + NAD(+) + H2O = L-glutamate + NADH + 2 H(+). It functions in the pathway amino-acid degradation; L-proline degradation into L-glutamate; L-glutamate from L-proline: step 2/2. The protein is 1-pyrroline-5-carboxylate dehydrogenase of Staphylococcus aureus (strain MRSA252).